Consider the following 105-residue polypeptide: Putative RNA-binding protein RbpF (105 aa).

The region spanning 2-79 (SIYVGNLSYE…RDLKVNKAKP (78 aa)) is the RRM domain. A compositionally biased stretch (basic and acidic residues) spans 75-84 (NKAKPKEDRG). Positions 75-105 (NKAKPKEDRGSFGGGNRGGYGGGGGGGRSRY) are disordered. Positions 85–105 (SFGGGNRGGYGGGGGGGRSRY) are enriched in gly residues.

This Nostoc sp. (strain PCC 7120 / SAG 25.82 / UTEX 2576) protein is Putative RNA-binding protein RbpF (rbpF).